The primary structure comprises 76 residues: DNA-directed RNA polymerase subunit epsilon (76 aa).

Belongs to the RNA polymerase subunit epsilon family. In terms of assembly, RNAP is composed of a core of 2 alpha, a beta and a beta' subunit. The core is associated with a delta subunit, and at least one of epsilon or omega. When a sigma factor is associated with the core the holoenzyme is formed, which can initiate transcription.

The enzyme catalyses RNA(n) + a ribonucleoside 5'-triphosphate = RNA(n+1) + diphosphate. In terms of biological role, a non-essential component of RNA polymerase (RNAP). This chain is DNA-directed RNA polymerase subunit epsilon, found in Streptococcus equi subsp. zooepidemicus (strain H70).